Consider the following 368-residue polypeptide: tRNA-specific 2-thiouridylase MnmA (368 aa).

ATP contacts are provided by residues 11–18 (GMSGGVDS) and Met-37. The tract at residues 97–99 (NPD) is interaction with target base in tRNA. Cys-102 functions as the Nucleophile in the catalytic mechanism. Residues Cys-102 and Cys-199 are joined by a disulfide bond. Gly-127 provides a ligand contact to ATP. The segment at 149–151 (KDQ) is interaction with tRNA. The Cysteine persulfide intermediate role is filled by Cys-199. Residues 311–312 (RY) are interaction with tRNA.

Belongs to the MnmA/TRMU family. As to quaternary structure, interacts with TusE.

The protein resides in the cytoplasm. It carries out the reaction S-sulfanyl-L-cysteinyl-[protein] + uridine(34) in tRNA + AH2 + ATP = 2-thiouridine(34) in tRNA + L-cysteinyl-[protein] + A + AMP + diphosphate + H(+). Functionally, catalyzes the 2-thiolation of uridine at the wobble position (U34) of tRNA(Lys), tRNA(Glu) and tRNA(Gln), leading to the formation of s(2)U34, the first step of tRNA-mnm(5)s(2)U34 synthesis. Sulfur is provided by IscS, via a sulfur-relay system. Binds ATP and its substrate tRNAs. The polypeptide is tRNA-specific 2-thiouridylase MnmA (Shigella dysenteriae serotype 1 (strain Sd197)).